Consider the following 336-residue polypeptide: Aspartate carbamoyltransferase catalytic subunit (336 aa).

R72 and T73 together coordinate carbamoyl phosphate. K100 is a binding site for L-aspartate. Positions 122, 155, and 158 each coordinate carbamoyl phosphate. L-aspartate is bound by residues R188 and R242. Carbamoyl phosphate-binding residues include G288 and P289.

The protein belongs to the aspartate/ornithine carbamoyltransferase superfamily. ATCase family. In terms of assembly, heterododecamer (2C3:3R2) of six catalytic PyrB chains organized as two trimers (C3), and six regulatory PyrI chains organized as three dimers (R2).

The catalysed reaction is carbamoyl phosphate + L-aspartate = N-carbamoyl-L-aspartate + phosphate + H(+). It participates in pyrimidine metabolism; UMP biosynthesis via de novo pathway; (S)-dihydroorotate from bicarbonate: step 2/3. Its function is as follows. Catalyzes the condensation of carbamoyl phosphate and aspartate to form carbamoyl aspartate and inorganic phosphate, the committed step in the de novo pyrimidine nucleotide biosynthesis pathway. The chain is Aspartate carbamoyltransferase catalytic subunit from Lactobacillus leichmannii.